Here is a 1214-residue protein sequence, read N- to C-terminus: MGVDFDVKTFCHNLRATKPPYECPVETCRKVYKSYSGIEYHLYHYDHDNPPPPQQTPLRKHKKKGRQSRPANKQSPSPSEVSQSPGREVMSYAQAQRMVEVDLHGRVHRISIFDNLDVVSEDEEAPEEAPENGSNKENTETPAATPKSGKHKNKEKRKDSNHHHHHNVSASTTPKLPEVVYRELEQDTPDAPPRPTSYYRYIEKSAEELDEEVEYDMDEEDYIWLDIMNERRKTEGVSPIPQEIFEYLMDRLEKESYFESHNKGDPNALVDEDAVCCICNDGECQNSNVILFCDMCNLAVHQECYGVPYIPEGQWLCRRCLQSPSRAVDCALCPNKGGAFKQTDDGRWAHVVCALWIPEVCFANTVFLEPIDSIEHIPPARWKLTCYICKQRGSGACIQCHKANCYTAFHVTCAQQAGLYMKMEPVRETGANGTSFSVRKTAYCDIHTPPGSARRLPALSHSEGEEDEDEEEDEGKGWSSEKVKKAKAKSRIKMKKARKILAEKRAAAPVVSVPCIPPHRLSKITNRLTIQRKSQFMQRLHSYWTLKRQSRNGVPLLRRLQTHLQSQRNCDQVGRDSEDKNWALKEQLKSWQRLRHDLERARLLVELIRKREKLKRETIKVQQIAMEMQLTPFLILLRKTLEQLQEKDTGNIFSEPVPLSEVPDYLDHIKKPMDFFTMKQNLEAYRYLNFDDFEEDFNLIVSNCLKYNAKDTIFYRAAVRLREQGGAVLRQARRQAEKMGIDFETGMHIPHSLAGDEATHHTEDAAEEERLVLLENQKHLPVEEQLKLLLERLDEVNASKQSVGRSRRAKMIKKEMTALRRKLAHQRETGRDGPERHGPSSRGSLTPHPAACDKDGQTDSAAEESSSQETSKGLGPNMSSTPAHEVGRRTSVLFSKKNPKTAGPPKRPGRPPKNRESQMTPSHGGSPVGPPQLPIMSSLRQRKRGRSPRPSSSSDSDSDKSTEDPPMDLPANGFSGGNQPVKKSFLVYRNDCSLPRSSSDSESSSSSSSSAASDRTSTTPSKQGRGKPSFSRGTFPEDSSEDTSGTENEAYSVGTGRGVGHSMVRKSLGRGAGWLSEDEDSPLDALDLVWAKCRGYPSYPALIIDPKMPREGMFHHGVPIPVPPLEVLKLGEQMTQEAREHLYLVLFFDNKRTWQWLPRTKLVPLGVNQDLDKEKMLEGRKSNIRKSVQIAYHRALQHRSKVQGEQSSETSDSD.

Residues Tyr-21–His-47 form a C2H2-type zinc finger. Disordered stretches follow at residues Tyr-43–Arg-87 and Val-118–Pro-177. The span at Leu-58 to Gln-67 shows a compositional bias: basic residues. The interval Arg-59 to Tyr-222 is interaction with KAT6A and KAT6B. The segment covering Gln-74–Pro-85 has biased composition (low complexity). The span at Val-119–Pro-130 shows a compositional bias: acidic residues. The residue at position 120 (Ser-120) is a Phosphoserine. Lys-147 carries the post-translational modification N6-acetyllysine. Over residues Ser-148 to Asn-167 the composition is skewed to basic residues. The residue at position 238 (Ser-238) is a Phosphoserine. The PHD-type 1 zinc-finger motif lies at Asp-273 to Ser-323. The C2HC pre-PHD-type zinc finger occupies Ala-327–Val-360. The PHD-type 2 zinc-finger motif lies at Leu-384–Thr-448. Residues Thr-448 to Lys-489 form a disordered region. A phosphoserine mark is found at Ser-460 and Ser-462. A compositionally biased stretch (acidic residues) spans Gly-464–Glu-474. The segment at Leu-501 to Arg-821 is interaction with MEAF6 and ING5. Residues Tyr-543–Glu-1079 form a required for RUNX1 and RUNX2 transcriptional activation region. N6-acetyllysine is present on Lys-580. A Bromo domain is found at Met-628–Ala-732. Positions Leu-819–Ser-1062 are disordered. Positions His-825 to Gly-838 are enriched in basic and acidic residues. A Phosphothreonine modification is found at Thr-858. The span at Thr-858 to Ser-871 shows a compositional bias: low complexity. A phosphoserine mark is found at Ser-860, Ser-917, Ser-922, and Ser-926. Low complexity predominate over residues Ser-993–Ser-1021. At Ser-1076 the chain carries Phosphoserine. A PWWP domain is found at Ala-1085–Asn-1168. Ser-1187 bears the Phosphoserine mark.

Component of some HBO1 complex composed of KAT7/HBO1, MEAF6, ING5, and BRPF1. Component of the MOZ/MORF complex composed at least of ING5, KAT6A, KAT6B, MEAF6 and one of BRPF1, BRD1/BRPF2 and BRPF3. Interacts (via PHD-type zinc finger domains) with unmethylated histone H3 at 'Lys-4' (H3K4me0). Interacts with trimethylated 'Lys-36' of histone H3 (H3K36me3). Interacts with ING5; interaction directs BRPF1 to H4K4me3-enriched chromatin at the 5' of active genes. Interacts with KAT7. Post-translationally, acetylated by KAT6A. In terms of tissue distribution, high levels in testis.

It is found in the nucleus. Its subcellular location is the chromosome. It localises to the cytoplasm. Its function is as follows. Scaffold subunit of various histone acetyltransferase (HAT) complexes, such as the MOZ/MORF and HBO1 complexes, which have a histone H3 acetyltransferase activity. Plays a key role in HBO1 complex by directing KAT7/HBO1 specificity towards histone H3 'Lys-14' acetylation (H3K14ac). Some HAT complexes preferentially mediate histone H3 'Lys-23' (H3K23ac) acetylation. Positively regulates the transcription of RUNX1 and RUNX2. The sequence is that of Peregrin from Homo sapiens (Human).